The sequence spans 97 residues: Sec-independent protein translocase protein TatA (97 aa).

A helical membrane pass occupies residues 1–21 (MGFNIWSLLIILLIVALLFGT). The interval 28–97 (GGDLGGAIRG…SAEHHDRSTS (70 aa)) is disordered. Basic and acidic residues predominate over residues 37–56 (GFKESMREGEEEEAQKRADG). Residues 78 to 87 (QARESSSARQ) show a composition bias toward low complexity. The segment covering 88-97 (SAEHHDRSTS) has biased composition (basic and acidic residues).

This sequence belongs to the TatA/E family. In terms of assembly, the Tat system comprises two distinct complexes: a TatABC complex, containing multiple copies of TatA, TatB and TatC subunits, and a separate TatA complex, containing only TatA subunits. Substrates initially bind to the TatABC complex, which probably triggers association of the separate TatA complex to form the active translocon.

It is found in the cell inner membrane. Part of the twin-arginine translocation (Tat) system that transports large folded proteins containing a characteristic twin-arginine motif in their signal peptide across membranes. TatA could form the protein-conducting channel of the Tat system. The protein is Sec-independent protein translocase protein TatA of Halorhodospira halophila (strain DSM 244 / SL1) (Ectothiorhodospira halophila (strain DSM 244 / SL1)).